The following is a 326-amino-acid chain: Probable cell division protein WhiA (326 aa).

Positions 275-308 form a DNA-binding region, H-T-H motif; sequence SLEELGALADPPLTKDAIAGRIRRLLALADKRAR.

The protein belongs to the WhiA family.

Functionally, involved in cell division and chromosome segregation. The sequence is that of Probable cell division protein WhiA from Salinispora tropica (strain ATCC BAA-916 / DSM 44818 / JCM 13857 / NBRC 105044 / CNB-440).